A 31-amino-acid chain; its full sequence is Scolopendra 4610.56 Da toxin (31 aa).

This sequence belongs to the scolopendra toxin 1 family. In terms of processing, contains one or more disulfide bonds. Expressed by the venom gland.

It localises to the secreted. The chain is Scolopendra 4610.56 Da toxin from Scolopendra viridicornis nigra (Brazilian giant centipede).